Reading from the N-terminus, the 238-residue chain is Probable transcriptional regulatory protein LACR_0237 (238 aa).

The protein belongs to the TACO1 family. YeeN subfamily.

The protein resides in the cytoplasm. In Lactococcus lactis subsp. cremoris (strain SK11), this protein is Probable transcriptional regulatory protein LACR_0237.